A 206-amino-acid chain; its full sequence is Small ribosomal subunit protein uS4 (206 aa).

The region spanning Ser-96–Leu-159 is the S4 RNA-binding domain.

It belongs to the universal ribosomal protein uS4 family. Part of the 30S ribosomal subunit. Contacts protein S5. The interaction surface between S4 and S5 is involved in control of translational fidelity.

One of the primary rRNA binding proteins, it binds directly to 16S rRNA where it nucleates assembly of the body of the 30S subunit. Its function is as follows. With S5 and S12 plays an important role in translational accuracy. The protein is Small ribosomal subunit protein uS4 of Chromobacterium violaceum (strain ATCC 12472 / DSM 30191 / JCM 1249 / CCUG 213 / NBRC 12614 / NCIMB 9131 / NCTC 9757 / MK).